The following is a 189-amino-acid chain: MASKRALVILAKGAEEMETVIPVDVMRRAGIKVTVAGLAGKDPVQCSRDVVICPDASLEDAKKEGPYDVVVLPGGNLGAQNLSESAAVKEILKEQENRKGLIAAICAGPTALLAHEIGFGSKVTTHPLAKDKMMNGGHYTYSENRVEKDGLILTSRGPGTSFEFALAIVEALNGKEVAAQVKAPLVLKD.

N-acetylalanine is present on Ala-2. S-palmitoyl cysteine attachment occurs at residues Cys-46 and Cys-53. A Phosphotyrosine modification is found at Tyr-67. Catalysis depends on Cys-106, which acts as the Nucleophile. At Cys-106 the chain carries Cysteine sulfinic acid (-SO2H); alternate. Cys-106 is lipidated: S-palmitoyl cysteine; alternate. Residue His-126 is part of the active site. A Glycyl lysine isopeptide (Lys-Gly) (interchain with G-Cter in SUMO) cross-link involves residue Lys-130. N6-acetyllysine is present on Lys-148. The residue at position 182 (Lys-182) is an N6-succinyllysine.

This sequence belongs to the peptidase C56 family. Homodimer. Binds EFCAB6/DJBP and PIAS2. Part of a ternary complex containing PARK7, EFCAB6/DJBP and AR. Interacts (via N-terminus) with OTUD7B. Interacts with BBS1, HIPK1, CLCF1 and MTERF. Forms a complex with PINK1 and PRKN. Interacts (via C-terminus) with NCF1; the interaction is enhanced by LPS and modulates NCF1 phosphorylation and membrane translocation. Interacts with NENF. Requires Deglycase activity does not require glutathione as a cofactor, however, glycated glutathione constitutes a PARK7 substrate. as cofactor. In terms of processing, sumoylated on Lys-130 by PIAS2 or PIAS4; which is enhanced after ultraviolet irradiation and essential for cell-growth promoting activity and transforming activity. Cys-106 is easily oxidized to sulfinic acid. Post-translationally, undergoes cleavage of a C-terminal peptide and subsequent activation of protease activity in response to oxidative stress. In terms of tissue distribution, highly expressed in pancreas, kidney, skeletal muscle, liver, testis and heart. Detected at slightly lower levels in placenta and brain (at protein level). Detected in astrocytes, Sertoli cells, spermatogonia, spermatids and spermatozoa. Expressed by pancreatic islets at higher levels than surrounding exocrine tissues.

The protein resides in the cell membrane. It localises to the cytoplasm. Its subcellular location is the nucleus. The protein localises to the membrane raft. It is found in the mitochondrion. The protein resides in the endoplasmic reticulum. The enzyme catalyses N(omega)-(1-hydroxy-2-oxopropyl)-L-arginyl-[protein] + H2O = lactate + L-arginyl-[protein] + H(+). It catalyses the reaction N(6)-(1-hydroxy-2-oxopropyl)-L-lysyl-[protein] + H2O = lactate + L-lysyl-[protein] + H(+). The catalysed reaction is S-(1-hydroxy-2-oxopropyl)-L-cysteinyl-[protein] + H2O = lactate + L-cysteinyl-[protein] + H(+). It carries out the reaction N(omega)-(1-hydroxy-2-oxoethyl)-L-arginyl-[protein] + H2O = L-arginyl-[protein] + glycolate + H(+). The enzyme catalyses N(6)-(1-hydroxy-2-oxoethyl)-L-lysyl-[protein] + H2O = glycolate + L-lysyl-[protein] + H(+). It catalyses the reaction S-(1-hydroxy-2-oxoethyl)-L-cysteinyl-[protein] + H2O = glycolate + L-cysteinyl-[protein] + H(+). The catalysed reaction is N(2)-(1-hydroxy-2-oxopropyl)-dGTP + H2O = lactate + dGTP + H(+). It carries out the reaction N(2)-(1-hydroxy-2-oxopropyl)-GTP + H2O = lactate + GTP + H(+). The enzyme catalyses N(2)-(1-hydroxy-2-oxopropyl)-GDP + H2O = lactate + GDP + H(+). It catalyses the reaction N(2)-(1-hydroxy-2-oxopropyl)-GMP + H2O = lactate + GMP + H(+). The catalysed reaction is N(2)-(1-hydroxy-2-oxoethyl)-dGTP + H2O = dGTP + glycolate + H(+). It carries out the reaction N(2)-(1-hydroxy-2-oxoethyl)-GTP + H2O = glycolate + GTP + H(+). The enzyme catalyses N(2)-(1-hydroxy-2-oxoethyl)-GDP + H2O = glycolate + GDP + H(+). It catalyses the reaction N(2)-(1-hydroxy-2-oxoethyl)-GMP + H2O = glycolate + GMP + H(+). The catalysed reaction is an N(2)-(1-hydroxy-2-oxopropyl)-guanosine in RNA + H2O = a guanosine in RNA + lactate + H(+). It carries out the reaction an N(2)-(1-hydroxy-2-oxopropyl)-2'-deoxyguanosine in DNA + H2O = a 2'-deoxyguanosine in DNA + lactate + H(+). The enzyme catalyses an N(2)-(1-hydroxy-2-oxoethyl)-guanosine in RNA + H2O = a guanosine in RNA + glycolate + H(+). It catalyses the reaction an N(2)-(1-hydroxy-2-oxoethyl)-2'-deoxyguanosine in DNA + H2O = a 2'-deoxyguanosine in DNA + glycolate + H(+). Its function is as follows. Multifunctional protein with controversial molecular function which plays an important role in cell protection against oxidative stress and cell death acting as oxidative stress sensor and redox-sensitive chaperone and protease. It is involved in neuroprotective mechanisms like the stabilization of NFE2L2 and PINK1 proteins, male fertility as a positive regulator of androgen signaling pathway as well as cell growth and transformation through, for instance, the modulation of NF-kappa-B signaling pathway. Has been described as a protein and nucleotide deglycase that catalyzes the deglycation of the Maillard adducts formed between amino groups of proteins or nucleotides and reactive carbonyl groups of glyoxals. But this function is rebuted by other works. As a protein deglycase, repairs methylglyoxal- and glyoxal-glycated proteins, and releases repaired proteins and lactate or glycolate, respectively. Deglycates cysteine, arginine and lysine residues in proteins, and thus reactivates these proteins by reversing glycation by glyoxals. Acts on early glycation intermediates (hemithioacetals and aminocarbinols), preventing the formation of advanced glycation endproducts (AGE) that cause irreversible damage. Also functions as a nucleotide deglycase able to repair glycated guanine in the free nucleotide pool (GTP, GDP, GMP, dGTP) and in DNA and RNA. Is thus involved in a major nucleotide repair system named guanine glycation repair (GG repair), dedicated to reversing methylglyoxal and glyoxal damage via nucleotide sanitization and direct nucleic acid repair. Protects histones from adduction by methylglyoxal, controls the levels of methylglyoxal-derived argininine modifications on chromatin. Able to remove the glycations and restore histone 3, histone glycation disrupts both local and global chromatin architecture by altering histone-DNA interactions as well as histone acetylation and ubiquitination levels. Displays a very low glyoxalase activity that may reflect its deglycase activity. Eliminates hydrogen peroxide and protects cells against hydrogen peroxide-induced cell death. Required for correct mitochondrial morphology and function as well as for autophagy of dysfunctional mitochondria. Plays a role in regulating expression or stability of the mitochondrial uncoupling proteins SLC25A14 and SLC25A27 in dopaminergic neurons of the substantia nigra pars compacta and attenuates the oxidative stress induced by calcium entry into the neurons via L-type channels during pacemaking. Regulates astrocyte inflammatory responses, may modulate lipid rafts-dependent endocytosis in astrocytes and neuronal cells. In pancreatic islets, involved in the maintenance of mitochondrial reactive oxygen species (ROS) levels and glucose homeostasis in an age- and diet dependent manner. Protects pancreatic beta cells from cell death induced by inflammatory and cytotoxic setting. Binds to a number of mRNAs containing multiple copies of GG or CC motifs and partially inhibits their translation but dissociates following oxidative stress. Metal-binding protein able to bind copper as well as toxic mercury ions, enhances the cell protection mechanism against induced metal toxicity. In macrophages, interacts with the NADPH oxidase subunit NCF1 to direct NADPH oxidase-dependent ROS production, and protects against sepsis. This is Parkinson disease protein 7 from Homo sapiens (Human).